The chain runs to 493 residues: MAKIMIQGTASSVGKSLIVAALCRIFKQDGYSVCPFKSQNMSLNSYITLDGKEMGRAQVLQAYAAGLEPEVYMNPILLKPTSDKKSQIIVNGKVYGNSTAMEYHNLKIKFKDMLKEQFKKLEENFDIVVMEGAGSPAEINLRDRDIVNMGMAELVDAPVLLVGDIDKGGVFASLAGTMLLLNEGEKERVKGTIINKFRGDVEILKPGLDMLEDIIHIPCLGVVPYTRLQLEDEDGAVEFNKKTYAPIDIAVIKMPHISNFTDLDALKSEEDVSIRFVTSKEELKKPDLLIIPGSKNTIEDLLYLRQCGLEESIKEYSNDGRIIGICGGYQVLGSKIKDPHNVETDLGEIDGLNLLDMKTIFEKEKVTTRVSAKLLNEEAENTVYGYEIHMGISKYGQNINPLFKIYDKNGEKVGYFDGAINDKGNVMGTYIHGVFDGVAFREKIINELRVKKGLKKKKSQVYEHMREKELDKLADIVRQSLDMKKIYSIIGMK.

A GATase cobBQ-type domain is found at 246–440 (PIDIAVIKMP…IHGVFDGVAF (195 aa)). Cysteine 326 (nucleophile) is an active-site residue. Histidine 432 is a catalytic residue.

The protein belongs to the CobB/CobQ family. CobQ subfamily.

It functions in the pathway cofactor biosynthesis; adenosylcobalamin biosynthesis. Functionally, catalyzes amidations at positions B, D, E, and G on adenosylcobyrinic A,C-diamide. NH(2) groups are provided by glutamine, and one molecule of ATP is hydrogenolyzed for each amidation. The protein is Cobyric acid synthase of Clostridium botulinum (strain Loch Maree / Type A3).